A 332-amino-acid polypeptide reads, in one-letter code: uncharacterized protein (332 aa).

The signal sequence occupies residues 1-32 (MSRDRGARGLRKYGRFALATGAATALSLTASG). The N-palmitoyl cysteine moiety is linked to residue Cys33. A lipid anchor (S-diacylglycerol cysteine) is attached at Cys33.

The protein localises to the cell membrane. This is an uncharacterized protein from Streptomyces avermitilis (strain ATCC 31267 / DSM 46492 / JCM 5070 / NBRC 14893 / NCIMB 12804 / NRRL 8165 / MA-4680).